The chain runs to 245 residues: Type II restriction enzyme EcoRV (245 aa).

3 residues coordinate Mg(2+): Glu-45, Asp-74, and Asp-90. Catalysis depends on residues Asp-74, Asp-90, and Lys-92.

As to quaternary structure, homodimer. Mg(2+) serves as cofactor.

It catalyses the reaction Endonucleolytic cleavage of DNA to give specific double-stranded fragments with terminal 5'-phosphates.. Its function is as follows. A P subtype restriction enzyme that recognizes the double-stranded sequence 5'-GATATC-3' and cleaves after T-3. This Escherichia coli protein is Type II restriction enzyme EcoRV (ecoRVR).